Here is a 194-residue protein sequence, read N- to C-terminus: Probable proteasome subunit beta type-4 (194 aa).

This sequence belongs to the peptidase T1B family. In terms of assembly, the 26S proteasome consists of a 20S proteasome core and two 19S regulatory subunits. The 20S proteasome core is composed of 28 subunits that are arranged in four stacked rings, resulting in a barrel-shaped structure. The two end rings are each formed by seven alpha subunits, and the two central rings are each formed by seven beta subunits. The catalytic chamber with the active sites is on the inside of the barrel.

The protein localises to the cytoplasm. Its subcellular location is the nucleus. Functionally, non-catalytic component of the proteasome, a multicatalytic proteinase complex which is characterized by its ability to cleave peptides with Arg, Phe, Tyr, Leu, and Glu adjacent to the leaving group at neutral or slightly basic pH. The proteasome has an ATP-dependent proteolytic activity. This Schizosaccharomyces pombe (strain 972 / ATCC 24843) (Fission yeast) protein is Probable proteasome subunit beta type-4.